The following is a 205-amino-acid chain: Rho-related protein racI (205 aa).

12-19 (GDSKTGKT) contacts GTP. The Effector region motif lies at 34–42 (YVPSHVDAT). GTP contacts are provided by residues 59–63 (DSSAL) and 119–122 (TKCD). C202 bears the Cysteine methyl ester mark. C202 is lipidated: S-geranylgeranyl cysteine. Residues 203 to 205 (IIQ) constitute a propeptide, removed in mature form.

The protein belongs to the small GTPase superfamily. Rho family.

It is found in the cell membrane. The protein is Rho-related protein racI (racI) of Dictyostelium discoideum (Social amoeba).